Here is a 555-residue protein sequence, read N- to C-terminus: Cilia- and flagella-associated protein 184 (555 aa).

The span at 1–12 (MDVSSEHTKDPG) shows a compositional bias: basic and acidic residues. Residues 1–202 (MDVSSEHTKD…KSQEEGKRLY (202 aa)) are disordered. Acidic residues-rich tracts occupy residues 41–54 (GELESEPEEEEEEQ) and 95–105 (PEPEEPAEVGA). Residues 106–117 (EEPAQPEPGAGP) show a composition bias toward low complexity. Residues 118-131 (EELEAEAGAEELEQ) are compositionally biased toward acidic residues. Basic and acidic residues predominate over residues 174 to 202 (ETQRDGAESKERDGEGRPAKSQEEGKRLY). 2 coiled-coil regions span residues 305–441 (YHQE…NSVQ) and 505–531 (DSLLRDLEEKVDKTELLHRRLESLKRH).

The protein belongs to the CFAP184 family. Forms a complex with CFAP263; the interaction is required for functional activity in cilia.

It localises to the cell projection. Its subcellular location is the cilium. It is found in the cytoplasm. The protein localises to the cytoskeleton. The protein resides in the microtubule organizing center. It localises to the centrosome. Functionally, in complex with CFAP263, acts as a regulator of ciliary beating that connects radial spoke 3 (RS3) to the inner dynein arm (IDA) and the nexin-dynein regulatory complex (N-DRC). The complex is positioned parallel to N-DRC and forms a connection between the arch at the base of RS3, the IDA tail and N-DRC. This chain is Cilia- and flagella-associated protein 184, found in Homo sapiens (Human).